Consider the following 316-residue polypeptide: Transaldolase (316 aa).

The active-site Schiff-base intermediate with substrate is Lys131.

It belongs to the transaldolase family. Type 1 subfamily. In terms of assembly, homodimer.

The protein resides in the cytoplasm. The catalysed reaction is D-sedoheptulose 7-phosphate + D-glyceraldehyde 3-phosphate = D-erythrose 4-phosphate + beta-D-fructose 6-phosphate. The protein operates within carbohydrate degradation; pentose phosphate pathway; D-glyceraldehyde 3-phosphate and beta-D-fructose 6-phosphate from D-ribose 5-phosphate and D-xylulose 5-phosphate (non-oxidative stage): step 2/3. Transaldolase is important for the balance of metabolites in the pentose-phosphate pathway. In Chromohalobacter salexigens (strain ATCC BAA-138 / DSM 3043 / CIP 106854 / NCIMB 13768 / 1H11), this protein is Transaldolase.